The sequence spans 89 residues: Small ribosomal subunit protein uS17 (89 aa).

The protein belongs to the universal ribosomal protein uS17 family. As to quaternary structure, part of the 30S ribosomal subunit.

One of the primary rRNA binding proteins, it binds specifically to the 5'-end of 16S ribosomal RNA. The chain is Small ribosomal subunit protein uS17 from Coxiella burnetii (strain Dugway 5J108-111).